Consider the following 807-residue polypeptide: FAD-linked oxidoreductase pytB (807 aa).

The N-terminal stretch at 1–18 is a signal peptide; the sequence is MRFLGIAAVATFSTVVSA. N-linked (GlcNAc...) asparagine glycosylation is found at Asn-45, Asn-106, Asn-120, Asn-242, Asn-295, Asn-351, Asn-419, and Asn-699. Residues 60–231 form the FAD-binding PCMH-type domain; that stretch reads FDELPVLLAY…VEFTLSLTSI (172 aa).

This sequence belongs to the oxygen-dependent FAD-linked oxidoreductase family. Requires FAD as cofactor.

Its pathway is secondary metabolite biosynthesis. FAD-linked oxidoreductase; part of the gene cluster that mediates the biosynthesis of pyranterreones, a family of antioxidative compounds. The first step of pyranonigrins biosynthesis is performed by the hybrid PKS-NRPS synthetase pytA that condenses 4 malonyl-CoA units ato the acetyl starter unit by the modular PKS of pytA. The acyl chain is then connected to an L-serine through the amide bond by the modular NRPS of pytA. A tetramic acid is formed and released from the PKS-NRPS pytA to give pyranterreone 5 with the help of the thioesterase pytI. Pyranterreone 5 could be methylated by pytC to afford pyranterreone 6. Both pyranterreones 5 and 6 are subsequently oxidized by the FAD-linked oxidoreductase pytB and the cytochrome P450 monooxygenase pytD to form the fused gamma-pyrone core, resulting in pyranterreones 7 and 11, respectively. The hydroxy group at C-8 of pyranterreones 7 and 11 are dehydrated by the aspartyl protease pytH to form a delta-7 double bond to give pyranterreones 3 and 1, 2 accordingly. The exo-methylene of pyranterreone 3 could be reduced into a pendant methyl by reductase pytE to provide pyranterreone 4, also known as cordylactam. Pyranterreone 4 can be reconverted to pyranterreone 3 through pytB-catalyzed dehydrogenation or further oxidized to pyranterreones 9 and 10. The chain is FAD-linked oxidoreductase pytB from Aspergillus terreus (strain NIH 2624 / FGSC A1156).